Consider the following 277-residue polypeptide: Urease accessory protein UreD (277 aa).

Belongs to the UreD family. In terms of assembly, ureD, UreF and UreG form a complex that acts as a GTP-hydrolysis-dependent molecular chaperone, activating the urease apoprotein by helping to assemble the nickel containing metallocenter of UreC. The UreE protein probably delivers the nickel.

It localises to the cytoplasm. Functionally, required for maturation of urease via the functional incorporation of the urease nickel metallocenter. This Flavobacterium johnsoniae (strain ATCC 17061 / DSM 2064 / JCM 8514 / BCRC 14874 / CCUG 350202 / NBRC 14942 / NCIMB 11054 / UW101) (Cytophaga johnsonae) protein is Urease accessory protein UreD.